The chain runs to 197 residues: Xanthine phosphoribosyltransferase (197 aa).

Xanthine is bound by residues Leu-20 and Asn-27. A 5-phospho-alpha-D-ribose 1-diphosphate-binding site is contributed by 128 to 132; it reads ANGQA. Lys-156 is a binding site for xanthine.

This sequence belongs to the purine/pyrimidine phosphoribosyltransferase family. Xpt subfamily. Homodimer.

Its subcellular location is the cytoplasm. It carries out the reaction XMP + diphosphate = xanthine + 5-phospho-alpha-D-ribose 1-diphosphate. The protein operates within purine metabolism; XMP biosynthesis via salvage pathway; XMP from xanthine: step 1/1. In terms of biological role, converts the preformed base xanthine, a product of nucleic acid breakdown, to xanthosine 5'-monophosphate (XMP), so it can be reused for RNA or DNA synthesis. The polypeptide is Xanthine phosphoribosyltransferase (Bacillus cereus (strain B4264)).